The sequence spans 650 residues: Chaperone protein DnaK (650 aa).

Position 200 is a phosphothreonine; by autocatalysis (Thr-200). The segment covering 612–632 has biased composition (low complexity); the sequence is GEGATAGAAAGAGAAGGQQAQ. The tract at residues 612 to 650 is disordered; the sequence is GEGATAGAAAGAGAAGGQQAQPQDDNVVDAEFKEVNDKK. A compositionally biased stretch (basic and acidic residues) spans 641–650; the sequence is AEFKEVNDKK.

The protein belongs to the heat shock protein 70 family.

Its function is as follows. Acts as a chaperone. In Cupriavidus necator (strain ATCC 17699 / DSM 428 / KCTC 22496 / NCIMB 10442 / H16 / Stanier 337) (Ralstonia eutropha), this protein is Chaperone protein DnaK.